The chain runs to 363 residues: Cytochrome P450 CYP82D47 (363 aa).

Cysteine 342 contributes to the heme binding site.

This sequence belongs to the cytochrome P450 family. The cofactor is heme.

In terms of biological role, probable heme-thiolate monooxygenase. The chain is Cytochrome P450 CYP82D47 from Panax ginseng (Korean ginseng).